The primary structure comprises 155 residues: 6,7-dimethyl-8-ribityllumazine synthase (155 aa).

5-amino-6-(D-ribitylamino)uracil-binding positions include F24, 58–60 (AFE), and 82–84 (VII). Residue 87–88 (ST) coordinates (2S)-2-hydroxy-3-oxobutyl phosphate. H90 functions as the Proton donor in the catalytic mechanism. Residue F115 coordinates 5-amino-6-(D-ribitylamino)uracil. R129 contributes to the (2S)-2-hydroxy-3-oxobutyl phosphate binding site.

It belongs to the DMRL synthase family.

The catalysed reaction is (2S)-2-hydroxy-3-oxobutyl phosphate + 5-amino-6-(D-ribitylamino)uracil = 6,7-dimethyl-8-(1-D-ribityl)lumazine + phosphate + 2 H2O + H(+). It participates in cofactor biosynthesis; riboflavin biosynthesis; riboflavin from 2-hydroxy-3-oxobutyl phosphate and 5-amino-6-(D-ribitylamino)uracil: step 1/2. In terms of biological role, catalyzes the formation of 6,7-dimethyl-8-ribityllumazine by condensation of 5-amino-6-(D-ribitylamino)uracil with 3,4-dihydroxy-2-butanone 4-phosphate. This is the penultimate step in the biosynthesis of riboflavin. The sequence is that of 6,7-dimethyl-8-ribityllumazine synthase from Chlorobaculum tepidum (strain ATCC 49652 / DSM 12025 / NBRC 103806 / TLS) (Chlorobium tepidum).